A 57-amino-acid chain; its full sequence is Potassium channel toxin alpha-KTx 8.2 (57 aa).

Residues 1–28 (MSRLYAIILIALVFNVVMTITPDMKVEA) form the signal peptide. Intrachain disulfides connect C31/C47, C34/C52, and C38/C54.

This sequence belongs to the short scorpion toxin superfamily. Potassium channel inhibitor family. Alpha-KTx 08 subfamily. Expressed by the venom gland.

Its subcellular location is the secreted. Functionally, this toxin inhibits rKv1.1/KCNA1 (100% inhibition at 3 uM), Kv1.3/KCNA3 (human, mouse and rat) (IC(50)=269-467 nM), shaker IR (60% at 3 uM) and activates the mouse capsaicin receptor TRPV1 (EC(50)=132 uM, at 20 degrees Celsius), a non-selective cation channel expressed by sensory neurons of the pain pathway. In vivo, intraplantar injection of this toxin in WT mice hind paw shows significant acute pain, whereas no pain is observed when the toxin is injected into TRPV1 KO mice. In addition, subcutaneous injection into mice (185 mg) produces an excitation of the animal, but no lethality, whereas injection into cockroaches does not provoke lethality as well. This Olivierus martensii (Manchurian scorpion) protein is Potassium channel toxin alpha-KTx 8.2.